Consider the following 345-residue polypeptide: RNA polymerase II holoenzyme cyclin-like subunit (345 aa).

The 125-residue stretch at 23 to 147 folds into the Cyclin N-terminal domain; sequence ESRRKLLLLE…KLAEFEFYLI (125 aa).

The protein belongs to the cyclin family. Cyclin C subfamily. As to quaternary structure, component of the SRB8-11 complex, a regulatory module of the Mediator complex.

The protein localises to the nucleus. In terms of biological role, component of the SRB8-11 complex. The SRB8-11 complex is a regulatory module of the Mediator complex which is itself involved in regulation of basal and activated RNA polymerase II-dependent transcription. The SRB8-11 complex may be involved in the transcriptional repression of a subset of genes regulated by Mediator. It may inhibit the association of the Mediator complex with RNA polymerase II to form the holoenzyme complex. The SRB8-11 complex phosphorylates the C-terminal domain (CTD) of the largest subunit of RNA polymerase II. This chain is RNA polymerase II holoenzyme cyclin-like subunit (SSN8), found in Debaryomyces hansenii (strain ATCC 36239 / CBS 767 / BCRC 21394 / JCM 1990 / NBRC 0083 / IGC 2968) (Yeast).